Consider the following 226-residue polypeptide: Fibrillarin-like rRNA/tRNA 2'-O-methyltransferase (226 aa).

Residues 85 to 86 (TT), 104 to 105 (EF), 129 to 130 (DA), and 149 to 152 (DVAQ) contribute to the S-adenosyl-L-methionine site.

The protein belongs to the methyltransferase superfamily. Fibrillarin family. In terms of assembly, interacts with nop5. Component of box C/D small ribonucleoprotein (sRNP) particles that contain rpl7ae, FlpA and nop5, plus a guide RNA.

Its function is as follows. Involved in pre-rRNA and tRNA processing. Utilizes the methyl donor S-adenosyl-L-methionine to catalyze the site-specific 2'-hydroxyl methylation of ribose moieties in rRNA and tRNA. Site specificity is provided by a guide RNA that base pairs with the substrate. Methylation occurs at a characteristic distance from the sequence involved in base pairing with the guide RNA. This Thermococcus sibiricus (strain DSM 12597 / MM 739) protein is Fibrillarin-like rRNA/tRNA 2'-O-methyltransferase.